Reading from the N-terminus, the 130-residue chain is Small ribosomal subunit protein uS8 (130 aa).

This sequence belongs to the universal ribosomal protein uS8 family. As to quaternary structure, part of the 30S ribosomal subunit. Contacts proteins S5 and S12.

Functionally, one of the primary rRNA binding proteins, it binds directly to 16S rRNA central domain where it helps coordinate assembly of the platform of the 30S subunit. This is Small ribosomal subunit protein uS8 from Marinomonas sp. (strain MWYL1).